A 528-amino-acid polypeptide reads, in one-letter code: Dihydromonacolin L monooxygenase LovA (528 aa).

At 1 to 23 (MTVDALTQPHHLLSLAWNDTQQH) the chain is on the cytoplasmic side. The helical; Signal-anchor for type II membrane protein transmembrane segment at 24–44 (GSWFAPLVTTSAGLLCLLLYL) threads the bilayer. Over 45-528 (CSSGRRSELP…DEDIRLPGSL (484 aa)) the chain is Lumenal. N-linked (GlcNAc...) asparagine glycosylation occurs at N399. Heme is bound at residue C465.

The protein belongs to the cytochrome P450 family. Requires heme as cofactor.

The protein resides in the membrane. Its subcellular location is the endoplasmic reticulum membrane. It catalyses the reaction dihydromonacolin L carboxylate + reduced [NADPH--hemoprotein reductase] + O2 = monacolin L carboxylate + oxidized [NADPH--hemoprotein reductase] + 2 H2O + H(+). It carries out the reaction monacolin L carboxylate + reduced [NADPH--hemoprotein reductase] + O2 = monacolin J carboxylate + oxidized [NADPH--hemoprotein reductase] + H2O + H(+). It participates in polyketide biosynthesis; lovastatin biosynthesis. Its function is as follows. Dihydromonacolin L monooxygenase; part of the gene cluster that mediates the biosynthesis of lovastatin (also known as mevinolin, mevacor or monacolin K), a hypolipidemic inhibitor of (3S)-hydroxymethylglutaryl-coenzyme A (HMG-CoA) reductase (HMGR). The first step in the biosynthesis of lovastatin is the production of dihydromonacolin L acid by the lovastatin nonaketide synthase lovB and the trans-acting enoyl reductase lovC via condensation of one acetyl-CoA unit and 8 malonyl-CoA units. Dihydromonacolin L acid is released from lovB by the thioesterase lovG. Next, dihydromonacolin L acid is oxidized by the dihydromonacolin L monooxygenase lovA twice to form monacolin J acid. The 2-methylbutyrate moiety of lovastatin is synthesized by the lovastatin diketide synthase lovF via condensation of one acetyl-CoA unit and one malonyl-CoA unit. Finally, the covalent attachment of this moiety to monacolin J acid is catalyzed by the transesterase lovD to yield lovastatin. LovD has broad substrate specificity and can also convert monacolin J to simvastatin using alpha-dimethylbutanoyl-S-methyl-3-mercaptopropionate (DMB-S-MMP) as the thioester acyl donor, and can also catalyze the reverse reaction and function as hydrolase in vitro. LovD has much higher activity with LovF-bound 2-methylbutanoate than with free diketide substrates. The protein is Dihydromonacolin L monooxygenase LovA of Aspergillus terreus (strain NIH 2624 / FGSC A1156).